The sequence spans 863 residues: Leucine--tRNA ligase (863 aa).

Positions 42–52 match the 'HIGH' region motif; that stretch reads PYPSGKIHMGH. The 'KMSKS' region signature appears at 618-622; the sequence is KMSKS. Lys-621 is a binding site for ATP.

The protein belongs to the class-I aminoacyl-tRNA synthetase family.

It localises to the cytoplasm. The enzyme catalyses tRNA(Leu) + L-leucine + ATP = L-leucyl-tRNA(Leu) + AMP + diphosphate. The polypeptide is Leucine--tRNA ligase (Desulfatibacillum aliphaticivorans).